Reading from the N-terminus, the 424-residue chain is MKIKDWNRSLKVRLVGEFFMNTSFWMVFPFLAIYFAEEFGKGLAGMLLIISQIFSVAANLFGGYFADRFGRKRMLVSAAVAQGFAFLLFALANSPWLTSPELSFVAFTLAGMCGSLYWPASQAMIADVIPEKYRSDVFAVFYTTLNIAVVIGPLFGAVLFFSYRFELLLTVAIISVLLGLLLRFYTEETLSAEVLEKWKEGNATGWRGALLTQVKDYGIILKDRVFLLFVIAGILGAQTFMQLDLVIPVYLKETIDRQTILDFLGREWSVTGETSFGILLAENGLIVALLTVVITRWMTKFPEKWVFFFSALLFGLSMAIFPMTSWFWIFFVAMAVFTFAELMVVGLQQSFISKLAPESMRGQYFAAASLRYTIGRMIAPISIPMTAWFGFGWTFIILGSFAVLSGFVYLWMFHLYDKRTVANI.

12 consecutive transmembrane segments (helical) span residues 15-35 (VGEF…AIYF), 42-62 (GLAG…NLFG), 74-94 (MLVS…LANS), 105-125 (VAFT…QAMI), 141-161 (FYTT…VLFF), 165-185 (FELL…LRFY), 227-247 (LLFV…DLVI), 274-294 (TSFG…TVVI), 305-325 (WVFF…PMTS), 327-347 (FWIF…VVGL), 367-389 (AASL…TAWF), and 393-415 (WTFI…MFHL).

The protein belongs to the major facilitator superfamily.

The protein localises to the cell membrane. Its activity is regulated as follows. Norfloxacin transport is inhibited by CCCP. In terms of biological role, exhibits dual functions as a Na(+)(Li(+)/K(+))/H(+) antiporter and a multidrug efflux pump. Catalyzes the efflux of Na(+), Li(+) and K(+) in exchange for external protons. Shows a preference for Na(+), followed by K(+) and Li(+). Can also function as a multidrug efflux pump. Transports ethidium bromide and norfloxacin. This is Na(+), Li(+), K(+)/H(+) antiporter from Planococcus maritimus.